We begin with the raw amino-acid sequence, 509 residues long: Tyrosine-protein kinase Lck (509 aa).

Gly-2 carries N-myristoyl glycine lipidation. The tract at residues 2-72 is interactions with CD4 and CD8; it reads GCGCSSHPED…DNLVIALHSY (71 aa). Residues Cys-3 and Cys-5 are each lipidated (S-palmitoyl cysteine). An SH3 domain is found at 61–121; the sequence is LQDNLVIALH…PFNFVAKANS (61 aa). Lys-99 participates in a covalent cross-link: Glycyl lysine isopeptide (Lys-Gly) (interchain with G-Cter in ubiquitin). Ser-102 carries the phosphoserine modification. Positions 127–224 constitute an SH2 domain; it reads WFFKNLSRKD…GLCTRLSRPC (98 aa). The interaction with PTPRH stretch occupies residues 154-242; sequence RESESTAGSF…WWEDEWEVPR (89 aa). Position 159 is a phosphothreonine (Thr-159). The residue at position 162 (Ser-162) is a Phosphoserine. Tyr-192 bears the Phosphotyrosine mark. Ser-194 bears the Phosphoserine mark. In terms of domain architecture, Protein kinase spans 245 to 498; sequence LKLVERLGAG…YLRSVLEDFF (254 aa). Residues 251 to 259 and Lys-273 each bind ATP; that span reads LGAGQFGEV. A Glycyl lysine isopeptide (Lys-Gly) (interchain with G-Cter in ubiquitin) cross-link involves residue Lys-276. Asp-364 acts as the Proton acceptor in catalysis. At Tyr-394 the chain carries Phosphotyrosine; by autocatalysis. Tyr-505 carries the phosphotyrosine; by CSK modification.

It belongs to the protein kinase superfamily. Tyr protein kinase family. SRC subfamily. As to quaternary structure, binds to the cytoplasmic domain of cell surface receptors, such as AXL, CD2, CD4, CD5, CD8, CD44, CD45 and CD122. Also binds to effector molecules, such as PI4K, VAV1, RASA1, FYB1 and to other protein kinases including CDK1, RAF1, ZAP70 and SYK. Binds to phosphatidylinositol 3'-kinase (PI3K) from T-lymphocytes through its SH3 domain and to the tyrosine phosphorylated form of KHDRBS1/p70 through its SH2 domain. Interacts with SQSTM1. Interacts with phosphorylated LIME1. LIME1. Interacts with CBLB and PTPRH. Interacts with RUNX3. Forms a signaling complex with EPHA1, PTK2B and PI3-KINASE; upon activation by EFNA1 which may regulate T-lymphocytes migration. Associates with ZAP70 and RHOH; these interactions allow LCK-mediated RHOH and CD3 subunit phosphorylation in the presence of functional ZAP70. Interacts with CEACAM1 (via cytoplasmic domain); mediates CEACAM1 phosphorylation resulting in PTPN6 recruitment that dephosphorylates TCR stimulation-induced CD247 and ZAP70. Interacts with CD160. Interacts with CD48. Post-translationally, autophosphorylated on Tyr-394, increasing enzymatic activity, this site is dephosphorylated by PTN22. Phosphorylated on Tyr-505 by CSK, decreasing activity. Dephosphorylated by PTPRC/CD45. Dephosphorylation at Tyr-394 by PTPN2 negatively regulates T-cells differentiation. Dephosphorylation at Tyr-394 by DUSP22 negatively regulates T-cell receptor signaling. In terms of processing, myristoylation is required prior to palmitoylation. Palmitoylation regulates association with the plasma membrane and could be mediated by ZDHHC2. Post-translationally, 'Lys-63'-linked ubiquitinated at Lys-99 and Lys-276 by UBR2; this modification is required for autophosphorylation at Tyr-394.

The protein resides in the cell membrane. Its subcellular location is the cytoplasm. It is found in the cytosol. It carries out the reaction L-tyrosyl-[protein] + ATP = O-phospho-L-tyrosyl-[protein] + ADP + H(+). Its activity is regulated as follows. The relative activities of the inhibitory tyrosine-protein kinase CSK and the activating tyrosine-protein phosphatase PTPRC/CD45 determine the level of LCK activity. These interactions allow rapid and efficient activation of LCK in response to TCR stimulation. Non-receptor tyrosine-protein kinase that plays an essential role in the selection and maturation of developing T-cells in the thymus and in the function of mature T-cells. Plays a key role in T-cell antigen receptor (TCR)-linked signal transduction pathways. Constitutively associated with the cytoplasmic portions of the CD4 and CD8 surface receptors. Association of the TCR with a peptide antigen-bound MHC complex facilitates the interaction of CD4 and CD8 with MHC class II and class I molecules, respectively, thereby recruiting the associated LCK protein to the vicinity of the TCR/CD3 complex. LCK then phosphorylates tyrosine residues within the immunoreceptor tyrosine-based activation motifs (ITAM) of the cytoplasmic tails of the TCR-gamma chains and CD3 subunits, initiating the TCR/CD3 signaling pathway. Once stimulated, the TCR recruits the tyrosine kinase ZAP70, that becomes phosphorylated and activated by LCK. Following this, a large number of signaling molecules are recruited, ultimately leading to lymphokine production. LCK also contributes to signaling by other receptor molecules. Associates directly with the cytoplasmic tail of CD2, which leads to hyperphosphorylation and activation of LCK. Also plays a role in the IL2 receptor-linked signaling pathway that controls the T-cell proliferative response. Binding of IL2 to its receptor results in increased activity of LCK. Is expressed at all stages of thymocyte development and is required for the regulation of maturation events that are governed by both pre-TCR and mature alpha beta TCR. Phosphorylates other substrates including RUNX3, PTK2B/PYK2, the microtubule-associated protein MAPT, RHOH or TYROBP. Interacts with UNC119; this interaction plays a crucial role in activation of LCK. This is Tyrosine-protein kinase Lck (LCK) from Aotus nancymaae (Ma's night monkey).